We begin with the raw amino-acid sequence, 205 residues long: Guanylate kinase (205 aa).

In terms of domain architecture, Guanylate kinase-like spans G5 to E184. ATP is bound at residue G12 to G19.

It belongs to the guanylate kinase family.

The protein resides in the cytoplasm. The catalysed reaction is GMP + ATP = GDP + ADP. In terms of biological role, essential for recycling GMP and indirectly, cGMP. The chain is Guanylate kinase from Listeria monocytogenes serotype 4b (strain F2365).